A 190-amino-acid chain; its full sequence is dCTP deaminase, dUMP-forming (190 aa).

DCTP contacts are provided by residues 101–106 (KSSLGR), Asp-119, 127–129 (TLE), Gln-148, Tyr-162, and Gln-174. Glu-129 functions as the Proton donor/acceptor in the catalytic mechanism. The disordered stretch occupies residues 163 to 190 (GSTRVGSKYQGQRGPTPSRSYQNFITST). Positions 171–190 (YQGQRGPTPSRSYQNFITST) are enriched in polar residues.

The protein belongs to the dCTP deaminase family. In terms of assembly, homotrimer.

It catalyses the reaction dCTP + 2 H2O = dUMP + NH4(+) + diphosphate. The protein operates within pyrimidine metabolism; dUMP biosynthesis; dUMP from dCTP: step 1/1. Functionally, bifunctional enzyme that catalyzes both the deamination of dCTP to dUTP and the hydrolysis of dUTP to dUMP without releasing the toxic dUTP intermediate. In Mycobacterium avium (strain 104), this protein is dCTP deaminase, dUMP-forming.